The sequence spans 303 residues: Glutathione transport system permease protein GsiD (303 aa).

The next 6 helical transmembrane spans lie at 40 to 60, 105 to 125, 144 to 164, 165 to 185, 222 to 242, and 266 to 286; these read AMTA…ARWI, LAAG…LGLL, LFAF…GSGI, ANVI…LVRG, IVVF…SLSF, and VIAP…VLAF. The region spanning 101-290 is the ABC transmembrane type-1 domain; sequence AQISLAAGVF…LTVLAFNLLG (190 aa).

Belongs to the binding-protein-dependent transport system permease family. As to quaternary structure, the complex is composed of two ATP-binding proteins (GsiA), two transmembrane proteins (GsiC and GsiD) and a solute-binding protein (GsiB).

The protein resides in the cell inner membrane. Part of the ABC transporter complex GsiABCD involved in glutathione import. Probably responsible for the translocation of the substrate across the membrane. The sequence is that of Glutathione transport system permease protein GsiD from Escherichia coli O6:K15:H31 (strain 536 / UPEC).